The primary structure comprises 176 residues: Mitochondrial inner membrane protein Mpv17 (176 aa).

Transmembrane regions (helical) follow at residues 18-38 (VQVL…QQLV), 53-73 (TMAS…YRVL), 94-114 (GGFA…LNGL), and 131-151 (LITN…LVPL).

The protein belongs to the peroxisomal membrane protein PXMP2/4 family.

It is found in the mitochondrion inner membrane. Its function is as follows. Non-selective channel that modulates the membrane potential under normal conditions and oxidative stress, and is involved in mitochondrial homeostasis. Involved in mitochondrial deoxynucleoside triphosphates (dNTP) pool homeostasis and mitochondrial DNA (mtDNA) maintenance. May be involved in the regulation of reactive oxygen species metabolism and the control of oxidative phosphorylation. In Bos taurus (Bovine), this protein is Mitochondrial inner membrane protein Mpv17.